A 426-amino-acid polypeptide reads, in one-letter code: Glutamate-1-semialdehyde 2,1-aminomutase (426 aa).

K268 bears the N6-(pyridoxal phosphate)lysine mark.

The protein belongs to the class-III pyridoxal-phosphate-dependent aminotransferase family. HemL subfamily. Requires pyridoxal 5'-phosphate as cofactor.

Its subcellular location is the cytoplasm. The catalysed reaction is (S)-4-amino-5-oxopentanoate = 5-aminolevulinate. Its pathway is porphyrin-containing compound metabolism; protoporphyrin-IX biosynthesis; 5-aminolevulinate from L-glutamyl-tRNA(Glu): step 2/2. The chain is Glutamate-1-semialdehyde 2,1-aminomutase from Saccharolobus islandicus (strain M.16.27) (Sulfolobus islandicus).